Consider the following 261-residue polypeptide: EKC/KEOPS complex subunit BUD32 (261 aa).

The region spanning 16-261 (DVDIAPISQG…LRGRKRSMLG (246 aa)) is the Protein kinase domain. ATP-binding positions include 22–30 (ISQGAEAIV) and lysine 43. The active-site Proton acceptor is the aspartate 161. Residues serine 187 and serine 189 each carry the phosphoserine; by autocatalysis modification.

The protein belongs to the protein kinase superfamily. BUD32 family. As to quaternary structure, component of the EKC/KEOPS complex composed of at least BUD32, CGI121, GON7, KAE1 and PCC1; the whole complex dimerizes.

The protein localises to the cytoplasm. It localises to the nucleus. Its subcellular location is the chromosome. The protein resides in the telomere. It catalyses the reaction L-seryl-[protein] + ATP = O-phospho-L-seryl-[protein] + ADP + H(+). It carries out the reaction L-threonyl-[protein] + ATP = O-phospho-L-threonyl-[protein] + ADP + H(+). Functionally, component of the EKC/KEOPS complex that is required for the formation of a threonylcarbamoyl group on adenosine at position 37 (t(6)A37) in tRNAs that read codons beginning with adenine. The complex is probably involved in the transfer of the threonylcarbamoyl moiety of threonylcarbamoyl-AMP (TC-AMP) to the N6 group of A37. BUD32 has ATPase activity in the context of the EKC/KEOPS complex and likely plays a supporting role to the catalytic subunit KAE1. The EKC/KEOPS complex also promotes both telomere uncapping and telomere elongation. The complex is required for efficient recruitment of transcriptional coactivators. Important for bud site selection. This Saccharomyces cerevisiae (strain ATCC 204508 / S288c) (Baker's yeast) protein is EKC/KEOPS complex subunit BUD32 (BUD32).